The sequence spans 233 residues: Pyridoxine 5'-phosphate synthase (233 aa).

Asn6 contacts 3-amino-2-oxopropyl phosphate. 8-9 (DH) is a binding site for 1-deoxy-D-xylulose 5-phosphate. Arg17 contacts 3-amino-2-oxopropyl phosphate. His42 serves as the catalytic Proton acceptor. 1-deoxy-D-xylulose 5-phosphate contacts are provided by Arg44 and His49. The active-site Proton acceptor is the Glu69. Thr99 lines the 1-deoxy-D-xylulose 5-phosphate pocket. Residue His186 is the Proton donor of the active site. 3-amino-2-oxopropyl phosphate-binding positions include Gly187 and 208-209 (GH).

Belongs to the PNP synthase family. As to quaternary structure, homooctamer; tetramer of dimers.

The protein resides in the cytoplasm. It catalyses the reaction 3-amino-2-oxopropyl phosphate + 1-deoxy-D-xylulose 5-phosphate = pyridoxine 5'-phosphate + phosphate + 2 H2O + H(+). It functions in the pathway cofactor biosynthesis; pyridoxine 5'-phosphate biosynthesis; pyridoxine 5'-phosphate from D-erythrose 4-phosphate: step 5/5. Functionally, catalyzes the complicated ring closure reaction between the two acyclic compounds 1-deoxy-D-xylulose-5-phosphate (DXP) and 3-amino-2-oxopropyl phosphate (1-amino-acetone-3-phosphate or AAP) to form pyridoxine 5'-phosphate (PNP) and inorganic phosphate. The chain is Pyridoxine 5'-phosphate synthase from Anaplasma phagocytophilum (strain HZ).